We begin with the raw amino-acid sequence, 2073 residues long: Dedicator of cytokinesis protein 11 (2073 aa).

Serine 12 is subject to Phosphoserine. Threonine 16 carries the phosphothreonine modification. Phosphoserine occurs at positions 23 and 161. Positions 165 to 272 (GVIKQGWLHK…WLIMLKKIIQ (108 aa)) constitute a PH domain. A Phosphotyrosine modification is found at tyrosine 248. Residues serine 306 and serine 445 each carry the phosphoserine modification. The C2 DOCK-type domain maps to 640 to 818 (KNHLYVYPLQ…PLLKIKTHLE (179 aa)). The tract at residues 1227–1267 (QNGHGIKREDSRGSLIPEGATGFPDPGSTSENTRQSSSRSS) is disordered. Phosphoserine is present on residues serine 1237 and serine 1240. Residues 1254–1267 (STSENTRQSSSRSS) are compositionally biased toward low complexity. The DOCKER domain occupies 1609-2036 (KSYASTPELR…LSDIIHEQIL (428 aa)).

It belongs to the DOCK family. As to quaternary structure, interacts with CDC42. Expressed in spleen, thymus, mesenteric lymph nodes (MLN), bone marrow and peripheral blood lymphocytes. Enriched in B-cells from germinal centers. Expressed in B-, T- and dendritic cells as well as Purkinje cells.

Its function is as follows. Guanine nucleotide-exchange factor (GEF) that activates CDC42 by exchanging bound GDP for free GTP. Required for marginal zone (MZ) B-cell development, is associated with early bone marrow B-cell development, MZ B-cell formation, MZ B-cell number and marginal metallophilic macrophages morphology. Facilitates filopodia formation through the activation of CDC42. In Mus musculus (Mouse), this protein is Dedicator of cytokinesis protein 11.